Here is a 142-residue protein sequence, read N- to C-terminus: Hemoglobin subunit alpha-A (142 aa).

In terms of domain architecture, Globin spans 2 to 142; that stretch reads VLSAADKTNV…VGTVLTAKYR (141 aa). Position 59 (H59) interacts with O2. Position 88 (H88) interacts with heme b.

The protein belongs to the globin family. Heterotetramer of two alpha chains and two beta chains. As to expression, red blood cells.

In terms of biological role, involved in oxygen transport from the lung to the various peripheral tissues. This is Hemoglobin subunit alpha-A (HBAA) from Anser indicus (Bar-headed goose).